The sequence spans 508 residues: Cyclin-A1-1 (508 aa).

Residues 1-28 (MSSNLAASRRSSSSSSVAAAAAAKRPAV) are compositionally biased toward low complexity. Disordered stretches follow at residues 1–40 (MSSN…GKAA) and 82–125 (VKKG…ESVL). The span at 29 to 39 (GEGGGGGGGKA) shows a compositional bias: gly residues. Positions 98–111 (ASAVKSASAKPAPA) are enriched in low complexity.

Belongs to the cyclin family. Cyclin AB subfamily. As to expression, expressed in the dividing region of the root cap and root apex. Expressed in the intercalary meristem of internodes and in adventitious roots under submergence conditions.

Its function is as follows. Involved in the control of the cell cycle at the G2/M (mitosis) transition. This is Cyclin-A1-1 (CYCA1-1) from Oryza sativa subsp. japonica (Rice).